Here is a 315-residue protein sequence, read N- to C-terminus: MIPAIFLMGPTASGKTELAVRLADALPIDIISVDSLLVYRHFDIGSAKPSLALRQQYPHALVDIREPDEPYSAGLFREDALHCIALARERGRIPLLVGGTGLYFRALECGIDTLPPANPALRQSLMALAETAGWPALHQRLATLDPEAAAGIAPHDRQRIQRALEIILGSGQTISGARHWQGTFPGPLYKIILRPPRSWLHQRITQRFDVMLNEGFLDEIADLSARHYAPELPAMRAVGYRQYFTWHDGLCSAAEAYQAALAATRQLAKRQDTWFKRESAHYYLDPSRDDASSLLLQMATRPRQGEVHSIGWDNG.

9–16 (GPTASGKT) is an ATP binding site. 11-16 (TASGKT) contributes to the substrate binding site. Interaction with substrate tRNA stretches follow at residues 34-37 (DSLL) and 158-162 (QRIQR).

Belongs to the IPP transferase family. As to quaternary structure, monomer. Requires Mg(2+) as cofactor.

The catalysed reaction is adenosine(37) in tRNA + dimethylallyl diphosphate = N(6)-dimethylallyladenosine(37) in tRNA + diphosphate. Catalyzes the transfer of a dimethylallyl group onto the adenine at position 37 in tRNAs that read codons beginning with uridine, leading to the formation of N6-(dimethylallyl)adenosine (i(6)A). This is tRNA dimethylallyltransferase from Acidithiobacillus ferrooxidans (strain ATCC 53993 / BNL-5-31) (Leptospirillum ferrooxidans (ATCC 53993)).